The sequence spans 258 residues: UPF0246 protein LHK_02295 (258 aa).

Belongs to the UPF0246 family.

In Laribacter hongkongensis (strain HLHK9), this protein is UPF0246 protein LHK_02295.